Consider the following 712-residue polypeptide: DNA ligase (712 aa).

NAD(+) contacts are provided by residues 53 to 57 (DAEFD), 103 to 104 (SL), and Glu-133. The active-site N6-AMP-lysine intermediate is Lys-135. NAD(+)-binding residues include Arg-156, Glu-196, Lys-315, and Lys-339. 4 residues coordinate Zn(2+): Cys-433, Cys-436, Cys-452, and Cys-458. One can recognise a BRCT domain in the interval 622–711 (SIERTLEGLS…PERDAEDGEP (90 aa)).

Belongs to the NAD-dependent DNA ligase family. LigA subfamily. It depends on Mg(2+) as a cofactor. The cofactor is Mn(2+).

It catalyses the reaction NAD(+) + (deoxyribonucleotide)n-3'-hydroxyl + 5'-phospho-(deoxyribonucleotide)m = (deoxyribonucleotide)n+m + AMP + beta-nicotinamide D-nucleotide.. In terms of biological role, DNA ligase that catalyzes the formation of phosphodiester linkages between 5'-phosphoryl and 3'-hydroxyl groups in double-stranded DNA using NAD as a coenzyme and as the energy source for the reaction. It is essential for DNA replication and repair of damaged DNA. The polypeptide is DNA ligase (Mycolicibacterium gilvum (strain PYR-GCK) (Mycobacterium gilvum (strain PYR-GCK))).